Reading from the N-terminus, the 2130-residue chain is Highly reducing polyketide synthase anuA (2130 aa).

Positions 1–213 (MKAGVLSGTS…GANCHVILEQ (213 aa)) constitute a Ketosynthase family 3 (KS3) domain. A Malonyl-CoA:ACP transacylase (MAT) domain is found at 317-644 (FVFTGQGSQW…SFAGNLWLKG (328 aa)). An N-terminal hotdog fold region spans residues 701–836 (HELLGSLLTG…GSIAIHPRNA (136 aa)). A PKS/mFAS DH domain is found at 701-1000 (HELLGSLLTG…LSPYQSTSQA (300 aa)). His-733 functions as the Proton acceptor; for dehydratase activity in the catalytic mechanism. The interval 849 to 1000 (LESTAKRTWY…LSPYQSTSQA (152 aa)) is C-terminal hotdog fold. Asp-914 (proton donor; for dehydratase activity) is an active-site residue. Residues 1405–1722 (GQLDTIYFQQ…SRSRIGKVAI (318 aa)) enclose the Enoyl reductase (ER) domain. Residues 1747-1927 (SYVMVGCLGG…AVAVGLGMIS (181 aa)) form the Ketoreductase (KR) domain. The region spanning 2047–2125 (TLDEAVLDHI…SLRDLAMTSL (79 aa)) is the Carrier domain. Ser-2084 bears the O-(pantetheine 4'-phosphoryl)serine mark.

The cofactor is pantetheine 4'-phosphate.

It participates in secondary metabolite biosynthesis. Functionally, highly reducing polyketide synthase; part of the gene cluster that mediates the biosynthesis of annullatin D, an alkylated aromatic polyketide with a fused dihydrobenzofuran lactone ring system that exhibits potent agonistic activities toward the cannabinoid receptors. The annullatin backbone 2-hydroxymethyl-3-pentylphenol is assembled from one acetyl-CoA starter unit and 5 malonyl-CoA elongation units by cooperation of the highly reducing polyketide synthase anuA, the short-chain dehydrogenase anuB and the oxidoreductase anuC, before being hydroxylated at the C-5 alkyl chain by the cytochrome P450 monooxygenase anuE to form (8S)-annullatin E. The prenyltransferase anuH subsequently installs one isoprenyl group at the benzene ring to form (8S)-annullatin J. Enzymatic or nonenzymatic dihydro-benzofuran ring formation between the prenyl and the phenolic hydroxyl groups in (8S)-annullatin J results in two diastereomers (2S,9S)-annullatin H and compound 12. The intermediate (2S,9S)-annullatin H is then converted to (2S,9S)-annullatin D by the FAD-linked oxidoreductase anuG-catalyzed five-member lactone ring formation. The isomer 12 acts as a substrate for the short-chain dehydrogenase anuF and is oxidized to (2R)-annullatin F, which is subsequently acetylated by an acetyltransferase leading to (2R)-annullatin G formation. The remaining enzymes identified within the cluster, anuD, anuI and anuJ, seem not to be involved in annullatin biosynthesis. This chain is Highly reducing polyketide synthase anuA, found in Penicillium roqueforti (strain FM164).